The primary structure comprises 296 residues: MMDSSEHDYYEYFDEFRGILLYKQFIKYWDNVEAFQARPDDLVIAAYPKSGTTWISEVVCMIYAEGDVKKCRQDAIFNRVPFLECRNDKMMNGVKQLEEMNSPRIIKTHLPPRLLPASFWEKRCKMICICRNAKDVAVSYYYFFLMVANHPDPGSFPEFVEKFMQGQVPYGSWYDHVKSWWEKSTDPRILFIFYEDMKEDIRKEVLKLIHFLGRKPSEELVDKIIKHTSFQEMKNNPSTNYTMLPEEIMNQKVSPFMRKGISGDWKNHFTVALNESFDKHYQQQMKGSTLQLRTEI.

A 3'-phosphoadenylyl sulfate-binding site is contributed by 49-54 (KSGTTW). 107-109 (KTH) is a binding site for substrate. Histidine 109 functions as the Proton acceptor in the catalytic mechanism. Residues arginine 131, serine 139, tyrosine 194, 228–233 (TSFQEM), and 258–260 (RKG) contribute to the 3'-phosphoadenylyl sulfate site.

The protein belongs to the sulfotransferase 1 family. In terms of assembly, homodimer. Post-translationally, the N-terminus is blocked. As to expression, adrenal gland and much less in liver. Detectable only during pregnancy in uterine.

The protein localises to the cytoplasm. It localises to the cytosol. It carries out the reaction estrone + 3'-phosphoadenylyl sulfate = estrone 3-sulfate + adenosine 3',5'-bisphosphate + H(+). The enzyme catalyses (24S)-hydroxycholesterol + 3'-phosphoadenylyl sulfate = (24S)-hydroxycholesterol 3-sulfate + adenosine 3',5'-bisphosphate + H(+). It catalyses the reaction 17beta-estradiol + 3'-phosphoadenylyl sulfate = 17beta-estradiol 3-sulfate + adenosine 3',5'-bisphosphate + H(+). The catalysed reaction is 3beta-hydroxyandrost-5-en-17-one + 3'-phosphoadenylyl sulfate = dehydroepiandrosterone 3-sulfate + adenosine 3',5'-bisphosphate + H(+). It carries out the reaction 4-ethylphenol + 3'-phosphoadenylyl sulfate = 4-ethylphenyl sulfate + adenosine 3',5'-bisphosphate + H(+). Inhibited by estradiol. Its function is as follows. Sulfotransferase that utilizes 3'-phospho-5'-adenylyl sulfate (PAPS) as sulfonate donor to catalyze the sulfate conjugation of estradiol and estrone. Is a key enzyme in estrogen homeostasis, the sulfation of estrogens leads to their inactivation. Also sulfates dehydroepiandrosterone (DHEA), pregnenolone, (24S)-hydroxycholesteroland xenobiotic compounds like ethinylestradiol, equalenin, diethyl stilbesterol and 1-naphthol at significantly lower efficiency. Does not sulfonate cortisol, testosterone and dopamine. May play a role in gut microbiota-host metabolic interaction. O-sulfonates 4-ethylphenol (4-EP), a dietary tyrosine-derived metabolite produced by gut bacteria. The product 4-EPS crosses the blood-brain barrier and may negatively regulate oligodendrocyte maturation and myelination, affecting the functional connectivity of different brain regions associated with the limbic system. The chain is Sulfotransferase 1E1 (SULT1E1) from Cavia porcellus (Guinea pig).